Consider the following 395-residue polypeptide: Chaperone protein DnaJ 2 (395 aa).

In terms of domain architecture, J spans 10 to 75 (DYYADLGVSK…TKRREYDDLK (66 aa)). The segment at 165–242 (GTTIPVELTG…CRGRGTVRRT (78 aa)) adopts a CR-type zinc-finger fold. Residues Cys178, Cys181, Cys194, Cys197, Cys216, Cys219, Cys230, and Cys233 each contribute to the Zn(2+) site. CXXCXGXG motif repeat units lie at residues 178-185 (CNTCHGSG), 194-201 (CGQCNGSG), 216-223 (CTNCGGTG), and 230-237 (CVDCRGRG).

Belongs to the DnaJ family. As to quaternary structure, homodimer. The cofactor is Zn(2+).

The protein localises to the cytoplasm. In terms of biological role, participates actively in the response to hyperosmotic and heat shock by preventing the aggregation of stress-denatured proteins and by disaggregating proteins, also in an autonomous, DnaK-independent fashion. Unfolded proteins bind initially to DnaJ; upon interaction with the DnaJ-bound protein, DnaK hydrolyzes its bound ATP, resulting in the formation of a stable complex. GrpE releases ADP from DnaK; ATP binding to DnaK triggers the release of the substrate protein, thus completing the reaction cycle. Several rounds of ATP-dependent interactions between DnaJ, DnaK and GrpE are required for fully efficient folding. Also involved, together with DnaK and GrpE, in the DNA replication of plasmids through activation of initiation proteins. In Corynebacterium efficiens (strain DSM 44549 / YS-314 / AJ 12310 / JCM 11189 / NBRC 100395), this protein is Chaperone protein DnaJ 2.